Reading from the N-terminus, the 362-residue chain is MDKVMAQLEGLVAHYEELQEMMADPEVINDTKRYMEISKEEADMREVVQKYRKYKSDIKEIDDNKEIISTESDNDLVEMAKEENSELEKEVAELEDEIKILMLPKDPNDDKDIIMEIRGAAGGDEASLFAGDLLRMYEKYAETQGWKVSLIDSEPTEVGGYKRVAVMITGDKVYSKLKYENGAHRVQRVPVTESQGRVHTSTATVAVMPEYEQVDIDLDPKDIRVDVYRSSGAGGQHINKTSSAVRMTHLPTGIVVAMQDQRSQQQNREKAMQILKSRVYDYYESQNRDQYDAKRKESVGTGDRSERIRTYNYPQNRVTDHRIGLTLNKLDRIMNGELDEIINALVLYYQTQQLEKMAEENA.

Residue Gln-236 is modified to N5-methylglutamine.

The protein belongs to the prokaryotic/mitochondrial release factor family. Methylated by PrmC. Methylation increases the termination efficiency of RF1.

It localises to the cytoplasm. Functionally, peptide chain release factor 1 directs the termination of translation in response to the peptide chain termination codons UAG and UAA. The polypeptide is Peptide chain release factor 1 (Lactobacillus johnsonii (strain CNCM I-12250 / La1 / NCC 533)).